The primary structure comprises 354 residues: DNA polymerase IV (354 aa).

Residues 6-187 (IIHIDCDCFY…LPVTKLHGVG (182 aa)) form the UmuC domain. Residues D10 and D105 each contribute to the Mg(2+) site. E106 is an active-site residue.

This sequence belongs to the DNA polymerase type-Y family. As to quaternary structure, monomer. Mg(2+) is required as a cofactor.

Its subcellular location is the cytoplasm. The enzyme catalyses DNA(n) + a 2'-deoxyribonucleoside 5'-triphosphate = DNA(n+1) + diphosphate. In terms of biological role, poorly processive, error-prone DNA polymerase involved in untargeted mutagenesis. Copies undamaged DNA at stalled replication forks, which arise in vivo from mismatched or misaligned primer ends. These misaligned primers can be extended by PolIV. Exhibits no 3'-5' exonuclease (proofreading) activity. May be involved in translesional synthesis, in conjunction with the beta clamp from PolIII. The chain is DNA polymerase IV from Pseudomonas syringae pv. syringae (strain B728a).